The primary structure comprises 360 residues: tRNA N6-adenosine threonylcarbamoyltransferase (360 aa).

2 residues coordinate Fe cation: His-115 and His-119. Residues 137 to 141, Asp-170, Gly-183, and Asn-283 contribute to the substrate site; that span reads LVSGG. Asp-311 lines the Fe cation pocket.

It belongs to the KAE1 / TsaD family. It depends on Fe(2+) as a cofactor.

The protein localises to the cytoplasm. The catalysed reaction is L-threonylcarbamoyladenylate + adenosine(37) in tRNA = N(6)-L-threonylcarbamoyladenosine(37) in tRNA + AMP + H(+). Required for the formation of a threonylcarbamoyl group on adenosine at position 37 (t(6)A37) in tRNAs that read codons beginning with adenine. Is involved in the transfer of the threonylcarbamoyl moiety of threonylcarbamoyl-AMP (TC-AMP) to the N6 group of A37, together with TsaE and TsaB. TsaD likely plays a direct catalytic role in this reaction. The polypeptide is tRNA N6-adenosine threonylcarbamoyltransferase (Sinorhizobium medicae (strain WSM419) (Ensifer medicae)).